A 306-amino-acid chain; its full sequence is Leucotoxin LukEv (306 aa).

A signal peptide spans 1–23 (MLAATLSVGLIAPLASPIQESRA).

Belongs to the aerolysin family. In terms of assembly, toxicity requires sequential binding and synergistic association of a class S and a class F component which form heterooligomeric complexes. LukEv (class S) associates with LukDv (class F).

It localises to the secreted. In terms of biological role, part of a bi-component leucotoxin that acts by forming pores in the membrane of the target cells. The activity of LukEv-LukDv to rabbit leukocytes is similar to that of the Panton-Valentine leucocidin (PVL). LukEv-LukDv is hemolytic to rabbit red blood cells although the activity is only 8% of gamma-hemolysin. The sequence is that of Leucotoxin LukEv (lukEv) from Staphylococcus aureus (strain NCTC 8325 / PS 47).